A 113-amino-acid chain; its full sequence is Hydrogenase maturation factor HypA (113 aa).

Residue His-2 participates in Ni(2+) binding. Cys-73, Cys-76, Cys-89, and Cys-92 together coordinate Zn(2+).

It belongs to the HypA/HybF family.

Functionally, involved in the maturation of [NiFe] hydrogenases. Required for nickel insertion into the metal center of the hydrogenase. This is Hydrogenase maturation factor HypA from Rhodobacter capsulatus (Rhodopseudomonas capsulata).